The sequence spans 409 residues: Single Ig IL-1-related receptor (409 aa).

Over methionine 1–histidine 117 the chain is Extracellular. Positions proline 9–threonine 108 constitute an Ig-like C2-type domain. N-linked (GlcNAc...) asparagine glycans are attached at residues asparagine 31, asparagine 58, asparagine 73, asparagine 85, and asparagine 101. Residues cysteine 32 and cysteine 97 are joined by a disulfide bond. The chain crosses the membrane as a helical; Signal-anchor for type III membrane protein span at residues valine 118–tyrosine 138. At valine 139–valine 409 the chain is on the cytoplasmic side. One can recognise a TIR domain in the interval lysine 162–leucine 306. Position 382 is a phosphoserine (serine 382).

It belongs to the interleukin-1 receptor family. Interacts with IL1R1, IRAK1, TLR4, TLR5, TLR9 and TRAF6. Upon IL-1 stimulation found in a complex at least composed of IL1R1, SIGIRR, MYD88, IRAK1 and TRAF6. Upon stimulation with LPC found in a complex at least composed of TLR4, SIG1IR, MYD88, IRAK1 and TRAF6. Interacts with PALM3. Expressed at high levels in kidney, and at moderate levels in colon, small intestine, lung, spleen and liver. Not expressed in brain and muscle. Expressed at high levels in epithelial cells, at moderate levels in splenocytes, and at low or undetectable levels in fibroblasts or endothelial cells. Expressed in mucosal and dendritic cells.

It is found in the membrane. In terms of biological role, acts as a negative regulator of the Toll-like and IL-1R receptor signaling pathways. Attenuates the recruitment of receptor-proximal signaling components to the TLR4 receptor, probably through an TIR-TIR domain interaction with TLR4. Through its extracellular domain interferes with the heterodimerization of Il1R1 and IL1RAP. This chain is Single Ig IL-1-related receptor (Sigirr), found in Mus musculus (Mouse).